A 327-amino-acid polypeptide reads, in one-letter code: Probable serine/threonine-protein kinase WNK5 (327 aa).

The segment at 1–48 is disordered; it reads MPPNPTPPRRATTTTTRATSGVRRGEEEQGGMAVSASAGEEEEAFEEV. Over residues 9–19 the composition is skewed to low complexity; the sequence is RRATTTTTRAT. A compositionally biased stretch (acidic residues) spans 39–48; the sequence is GEEEEAFEEV. In terms of domain architecture, Protein kinase spans 55 to 314; that stretch reads GRYADVLGLG…AAELLRDPFF (260 aa). 136–139 contributes to the ATP binding site; the sequence is TEVC. D203 acts as the Proton acceptor in catalysis.

Belongs to the protein kinase superfamily. Ser/Thr protein kinase family. WNK subfamily.

It carries out the reaction L-seryl-[protein] + ATP = O-phospho-L-seryl-[protein] + ADP + H(+). It catalyses the reaction L-threonyl-[protein] + ATP = O-phospho-L-threonyl-[protein] + ADP + H(+). The sequence is that of Probable serine/threonine-protein kinase WNK5 (WNK5) from Oryza sativa subsp. japonica (Rice).